Consider the following 450-residue polypeptide: MGKYFGTDGVRGEANLELTPELAFKLGRFGGYVLSQHETEAPKVFVGRDTRISGEMLESALVAGLLSVGIHVYKLGVLATPAVAYLVETEGASAGVMIXASHNPALDNGIKFFGGDGFKLDDEKEAEIEALLDAEEDTLPXPSAEGLGILVDYPEGLRKYEGYLVSTGTPLDGMKVALDTANGAASTSARQIFADLGAQLTVIGETPDGLNINLNVGSTHPEALQEVVKESGSAIGLAFDGDSDRLIAVDENGDIVDGDKIMYIIGKYLSEKGQLAQNTIVTTVMSNLGFHKALNREGINKAVTAVGDRYVVEEMRKSGYNLGGEQSGHVILMDYNTTGDGQLSAVQLTKIMKETGKSLSELAAEVTIYPQKLVNIRVENVMKEKAMEVPAIKAIIEKMEEEMAGNGRILVRPSGTEPLLRVMAEAPTTEEVDYYVDTITDVVRAEIGID.

The Phosphoserine intermediate role is filled by S101. Positions 101, 240, 242, and 244 each coordinate Mg(2+). Phosphoserine is present on S101.

It belongs to the phosphohexose mutase family. Requires Mg(2+) as cofactor. In terms of processing, activated by phosphorylation.

The catalysed reaction is alpha-D-glucosamine 1-phosphate = D-glucosamine 6-phosphate. Its function is as follows. Catalyzes the conversion of glucosamine-6-phosphate to glucosamine-1-phosphate. This is Phosphoglucosamine mutase from Streptococcus pneumoniae serotype 19F (strain G54).